The primary structure comprises 368 residues: Phospho-N-acetylmuramoyl-pentapeptide-transferase (368 aa).

The next 9 helical transmembrane spans lie at 30–50 (AAAI…IRYL), 72–92 (LPTM…FLWA), 98–118 (HVWL…IDDY), 139–159 (ISLG…AVLL), 170–190 (LSID…TAVS), 201–221 (GLAS…SYLA), 238–258 (GGEI…FLWF), 264–286 (EIIM…ALLI), and 345–365 (KIVI…LMTL).

This sequence belongs to the glycosyltransferase 4 family. MraY subfamily. Requires Mg(2+) as cofactor.

The protein resides in the cell inner membrane. The enzyme catalyses UDP-N-acetyl-alpha-D-muramoyl-L-alanyl-gamma-D-glutamyl-meso-2,6-diaminopimeloyl-D-alanyl-D-alanine + di-trans,octa-cis-undecaprenyl phosphate = di-trans,octa-cis-undecaprenyl diphospho-N-acetyl-alpha-D-muramoyl-L-alanyl-D-glutamyl-meso-2,6-diaminopimeloyl-D-alanyl-D-alanine + UMP. Its pathway is cell wall biogenesis; peptidoglycan biosynthesis. In terms of biological role, catalyzes the initial step of the lipid cycle reactions in the biosynthesis of the cell wall peptidoglycan: transfers peptidoglycan precursor phospho-MurNAc-pentapeptide from UDP-MurNAc-pentapeptide onto the lipid carrier undecaprenyl phosphate, yielding undecaprenyl-pyrophosphoryl-MurNAc-pentapeptide, known as lipid I. The sequence is that of Phospho-N-acetylmuramoyl-pentapeptide-transferase from Chlorobium phaeobacteroides (strain DSM 266 / SMG 266 / 2430).